Here is a 1146-residue protein sequence, read N- to C-terminus: Nucleolar protein 6 (1146 aa).

Positions 1–48 (MGPAPAGEQLRGATGEPEVMEPALEGTGKEGKKASSRKRTLAEPPAKG) are disordered. Phosphoserine is present on Ser-56. The stretch at 83–114 (LLRLQVEELLKEVRLSEKKKDRIDAFLREVNQ) forms a coiled coil. Residues Ser-283, Ser-289, and Ser-811 each carry the phosphoserine modification.

It belongs to the NRAP family. As to quaternary structure, part of the small subunit (SSU) processome, composed of more than 70 proteins and the RNA chaperone small nucleolar RNA (snoRNA) U3. Interacts with RRP7A; required for NOL6 localization to nucleolus.

The protein resides in the nucleus. Its subcellular location is the nucleolus. It is found in the chromosome. Part of the small subunit (SSU) processome, first precursor of the small eukaryotic ribosomal subunit. During the assembly of the SSU processome in the nucleolus, many ribosome biogenesis factors, an RNA chaperone and ribosomal proteins associate with the nascent pre-rRNA and work in concert to generate RNA folding, modifications, rearrangements and cleavage as well as targeted degradation of pre-ribosomal RNA by the RNA exosome. This Homo sapiens (Human) protein is Nucleolar protein 6.